Reading from the N-terminus, the 555-residue chain is DNA-directed primase/polymerase protein (555 aa).

Residues Met-1–Lys-22 adopt a coiled-coil conformation. Substrate-binding positions include Arg-76, Asp-114–Glu-116, and Lys-165–His-169. Residues Asp-114 and Glu-116 each coordinate Mn(2+). The segment at Glu-210–Phe-230 is disordered. Residues Phe-219–Phe-230 are compositionally biased toward polar residues. Position 255 is a phosphoserine (Ser-255). Residues Arg-288–Arg-291 and Lys-297 contribute to the substrate site. 4 residues coordinate Zn(2+): Cys-418, His-425, Cys-445, and Cys-450. A Zinc knuckle motif motif is present at residues Cys-418–Lys-451. The disordered stretch occupies residues Thr-480–Ala-503. The tract at residues Thr-480–Glu-555 is interaction with RPA1. 2 short sequence motifs (RPA1-binding motif) span residues Trp-509–Glu-523 and Glu-543–Glu-551.

The protein belongs to the eukaryotic-type primase small subunit family. Interacts with RPA1; leading to recruitment to chromatin and stimulate DNA primase activity. Interacts with SSBP1. Interacts with POLDIP2; leading to enhance DNA polymerase activity. The cofactor is Mn(2+).

It is found in the nucleus. The protein localises to the mitochondrion matrix. The protein resides in the chromosome. The enzyme catalyses ssDNA + n NTP = ssDNA/pppN(pN)n-1 hybrid + (n-1) diphosphate.. It carries out the reaction DNA(n) + a 2'-deoxyribonucleoside 5'-triphosphate = DNA(n+1) + diphosphate. Functionally, DNA primase and DNA polymerase required to tolerate replication-stalling lesions by bypassing them. Required to facilitate mitochondrial and nuclear replication fork progression by initiating de novo DNA synthesis using dNTPs and acting as an error-prone DNA polymerase able to bypass certain DNA lesions. Shows a high capacity to tolerate DNA damage lesions such as 8oxoG and abasic sites in DNA. Provides different translesion synthesis alternatives when DNA replication is stalled: able to synthesize DNA primers downstream of lesions, such as ultraviolet (UV) lesions, R-loops and G-quadruplexes, to allow DNA replication to continue. Can also realign primers ahead of 'unreadable lesions' such as abasic sites and 6-4 photoproduct (6-4 pyrimidine-pyrimidinone), thereby skipping the lesion. Repriming avoids fork degradation while leading to accumulation of internal ssDNA gaps behind the forks. Also able to incorporate nucleotides opposite DNA lesions such as 8oxoG, like a regular translesion synthesis DNA polymerase. Also required for reinitiating stalled forks after UV damage during nuclear DNA replication. Required for mitochondrial DNA (mtDNA) synthesis and replication, by reinitiating synthesis after UV damage or in the presence of chain-terminating nucleotides. Prevents APOBEC family-mediated DNA mutagenesis by repriming downstream of abasic site to prohibit error-prone translesion synthesis. Has non-overlapping function with POLH. In addition to its role in DNA damage response, also required to maintain efficient nuclear and mitochondrial DNA replication in unperturbed cells. The polypeptide is DNA-directed primase/polymerase protein (Bos taurus (Bovine)).